The chain runs to 307 residues: Zygote arrest protein 2.L (307 aa).

The interval L138 to K200 is disordered. The segment covering L156–P186 has biased composition (basic and acidic residues). The segment at Q208–K293 adopts a 3CxxC-type zinc-finger fold.

It belongs to the ZAR1 family. As to expression, expressed in oocytes.

Its subcellular location is the cytoplasm. The protein localises to the cytoplasmic ribonucleoprotein granule. Functionally, mRNA-binding protein required for maternal mRNA storage, translation and degradation during oocyte maturation. Probably promotes formation of some phase-separated membraneless compartment that stores maternal mRNAs in oocytes: acts by undergoing liquid-liquid phase separation upon binding to maternal mRNAs. Binds to the 3'-UTR of maternal mRNAs, inhibiting their translation. The protein is Zygote arrest protein 2.L (zar2.L) of Xenopus laevis (African clawed frog).